The sequence spans 147 residues: Hemoglobin subunit beta (147 aa).

Positions 3-147 (HWTAEEKQLI…VAHALARKYH (145 aa)) constitute a Globin domain. Heme b-binding residues include His-64 and His-93.

It belongs to the globin family. Heterotetramer of two alpha chains and two beta chains. In terms of tissue distribution, red blood cells.

Functionally, involved in oxygen transport from the lung to the various peripheral tissues. This Anas platyrhynchos (Mallard) protein is Hemoglobin subunit beta (HBB).